The sequence spans 377 residues: Chaperone protein DnaJ (377 aa).

The region spanning 5–70 is the J domain; it reads DYYEILGVSK…QKRAAYDQYG (66 aa). A CR-type zinc finger spans residues 132-210; sequence GVTKEIRIPT…CHGHGRVEKT (79 aa). Zn(2+) is bound by residues cysteine 145, cysteine 148, cysteine 162, cysteine 165, cysteine 184, cysteine 187, cysteine 198, and cysteine 201. 4 CXXCXGXG motif repeats span residues 145 to 152, 162 to 169, 184 to 191, and 198 to 205; these read CDVCHGSG, CPTCHGAG, CPHCQGRG, and CNKCHGHG.

Belongs to the DnaJ family. As to quaternary structure, homodimer. Requires Zn(2+) as cofactor.

It is found in the cytoplasm. Its function is as follows. Participates actively in the response to hyperosmotic and heat shock by preventing the aggregation of stress-denatured proteins and by disaggregating proteins, also in an autonomous, DnaK-independent fashion. Unfolded proteins bind initially to DnaJ; upon interaction with the DnaJ-bound protein, DnaK hydrolyzes its bound ATP, resulting in the formation of a stable complex. GrpE releases ADP from DnaK; ATP binding to DnaK triggers the release of the substrate protein, thus completing the reaction cycle. Several rounds of ATP-dependent interactions between DnaJ, DnaK and GrpE are required for fully efficient folding. Also involved, together with DnaK and GrpE, in the DNA replication of plasmids through activation of initiation proteins. The sequence is that of Chaperone protein DnaJ from Klebsiella pneumoniae subsp. pneumoniae (strain ATCC 700721 / MGH 78578).